Here is a 620-residue protein sequence, read N- to C-terminus: Chaperone protein HscA homolog (620 aa).

The protein belongs to the heat shock protein 70 family.

Its function is as follows. Chaperone involved in the maturation of iron-sulfur cluster-containing proteins. Has a low intrinsic ATPase activity which is markedly stimulated by HscB. In Shewanella piezotolerans (strain WP3 / JCM 13877), this protein is Chaperone protein HscA homolog.